Here is a 596-residue protein sequence, read N- to C-terminus: Arginine--tRNA ligase (596 aa).

Positions 123-133 (PNTNKPLHLGH) match the 'HIGH' region motif.

This sequence belongs to the class-I aminoacyl-tRNA synthetase family. In terms of assembly, monomer.

The protein localises to the cytoplasm. The catalysed reaction is tRNA(Arg) + L-arginine + ATP = L-arginyl-tRNA(Arg) + AMP + diphosphate. In Amoebophilus asiaticus (strain 5a2), this protein is Arginine--tRNA ligase.